A 142-amino-acid polypeptide reads, in one-letter code: Large ribosomal subunit protein uL11 (142 aa).

The protein belongs to the universal ribosomal protein uL11 family. Part of the ribosomal stalk of the 50S ribosomal subunit. Interacts with L10 and the large rRNA to form the base of the stalk. L10 forms an elongated spine to which L12 dimers bind in a sequential fashion forming a multimeric L10(L12)X complex. In terms of processing, one or more lysine residues are methylated.

Its function is as follows. Forms part of the ribosomal stalk which helps the ribosome interact with GTP-bound translation factors. In Shewanella amazonensis (strain ATCC BAA-1098 / SB2B), this protein is Large ribosomal subunit protein uL11.